The primary structure comprises 67 residues: MKPDIHPDYHEVAVTCSCGNNFKTRSTYQGSELNVEVCSACHPFFTGKQKIMDTAGQVDKFRRRYGM.

The Zn(2+) site is built by Cys-16, Cys-18, Cys-38, and Cys-41.

This sequence belongs to the bacterial ribosomal protein bL31 family. Type A subfamily. As to quaternary structure, part of the 50S ribosomal subunit. Requires Zn(2+) as cofactor.

Functionally, binds the 23S rRNA. The sequence is that of Large ribosomal subunit protein bL31 from Thioalkalivibrio sulfidiphilus (strain HL-EbGR7).